Consider the following 1198-residue polypeptide: MTKKPGGPGKNRAINMLKRGLPRVFPLVGVKRVVMSLLDGRGPVRFVLALITFFKFTALAPTKALLGRWKAVEKSVAMKHLTSFKRELGTLIDAVNKRGRKQNKRGGNEGSIMWLASLAVVIAYAGAMKLSNFQGKLLMTINNTDIADVIVIPTSKGENRCWVRAIDVGYMCEDTITYECPKLTMGNDPEDVDCWCDNQEVYVQYGRCTRTRHSKRSRRSVSVQTHGESSLVNKKEAWLDSTKATRYLMKTENWIIRNPGYAFLAATLGWMLGSNNGQRVVFTILLLLVAPAYSFNCLGMGNRDFIEGASGATWVDLVLEGDSCLTIMANDKPTLDVRMINIEASQLAEVRSYCYHASVTDISTVARCPTTGEAHNEKRADSSYVCKQGFTDRGWGNGCGLFGKGSIDTCAKFSCTSKAIGRTIQPENIKYEVGIFVHGTTTSENHGNYSAQVGASQAAKFTITPNAPSITLKLGDYGEVTLDCEPRSGLNTEAFYVMTVGSKSFLVHREWFHDLALPWTSPSSTAWRNRELLMEFEEAHATKQSVVALGSQEGGLHQALAGAIVVEYSSSVKLTSGHLKCRLKMDKLALKGTTYGMCTEKFSFAKNPADTGHGTVVIELSYSGSDGPCKIPIVSVASLNDMTPVGRLVTVNPFVATSSANSKVLVEMEPPFGDSYIVVGRGDKQINHHWHKAGSTLGKAFSTTLKGAQRLAALGDTAWDFGSIGGVFNSIGKAVHQVFGGAFRTLFGGMSWITQGLMGALLLWMGVNARDRSIALAFLATGGVLVFLATNVHADTGCAIDITRKEMRCGSGIFVHNDVEAWVDRYKYLPETPRSLAKIVHKAHKEGVCGVRSVTRLEHQMWEAVRDELNVLLKENAVDLSVVVNKPVGRYRSAPKRLSMTQEKFEMGWKAWGKSILFAPELANSTFVVDGPETKECPDEHRAWNSMQIEDFGFGITSTRVWLKIREESTDECDGAIIGTAVKGHVAVHSDLSYWIESRYNDTWKLERAVFGEVKSCTWPETHTLWGDGVEESELIIPHTIAGPKSKHNRREGYKTQNQGPWDENGIVLDFDYCPGTKVTITEDCGKRGPSVRTTTDSGKLITDWCCRSCSLPPLRFRTENGCWYGMEIRPVRHDETTLVRSQVDAFNGEMVDPFSAGPSGDVSGHPGGPSQEVDGQIDHSCGFGGPTCADAWGHHLH.

The segment at 2–15 (TKKPGGPGKNRAIN) is interaction with host EXOC1. The Cytoplasmic segment spans residues 2–109 (TKKPGGPGKN…RKQNKRGGNE (108 aa)). Residues 37–72 (LLDGRGPVRFVLALITFFKFTALAPTKALLGRWKAV) are hydrophobic; homodimerization of capsid protein C. Positions 106-127 (GGNEGSIMWLASLAVVIAYAGA) are cleaved as a propeptide — ER anchor for the capsid protein C, removed in mature form by serine protease NS3. Residues 110–130 (GSIMWLASLAVVIAYAGAMKL) form a helical membrane-spanning segment. The Extracellular portion of the chain corresponds to 131 to 253 (SNFQGKLLMT…ATRYLMKTEN (123 aa)). Asparagine 142 carries an N-linked (GlcNAc...) asparagine; by host glycan. The helical transmembrane segment at 254-274 (WIIRNPGYAFLAATLGWMLGS) threads the bilayer. Residues 275 to 279 (NNGQR) are Cytoplasmic-facing. Residues 280 to 294 (VVFTILLLLVAPAYS) traverse the membrane as a helical segment. Residues 295-746 (FNCLGMGNRD…QVFGGAFRTL (452 aa)) lie on the Extracellular side of the membrane. 6 disulfides stabilise this stretch: cysteine 297–cysteine 324, cysteine 354–cysteine 410, cysteine 354–cysteine 415, cysteine 368–cysteine 399, cysteine 386–cysteine 410, and cysteine 386–cysteine 415. The segment at 392–405 (DRGWGNGCGLFGKG) is fusion peptide. Residue asparagine 448 is glycosylated (N-linked (GlcNAc...) asparagine; by host). 2 disulfides stabilise this stretch: cysteine 484–cysteine 581 and cysteine 598–cysteine 629. A helical membrane pass occupies residues 747–767 (FGGMSWITQGLMGALLLWMGV). The Cytoplasmic segment spans residues 768-773 (NARDRS). A helical transmembrane segment spans residues 774–794 (IALAFLATGGVLVFLATNVHA). Over 795–1198 (DTGCAIDITR…CADAWGHHLH (404 aa)) the chain is Extracellular. 6 cysteine pairs are disulfide-bonded: cysteine 798-cysteine 809, cysteine 849-cysteine 937, cysteine 973-cysteine 1017, cysteine 1074-cysteine 1123, cysteine 1085-cysteine 1106, and cysteine 1107-cysteine 1110. Asparagine 924 and asparagine 1001 each carry an N-linked (GlcNAc...) asparagine; by host glycan. The interval 1152–1177 (VDPFSAGPSGDVSGHPGGPSQEVDGQ) is disordered.

Homodimer. Interacts (via N-terminus) with host EXOC1 (via C-terminus); this interaction results in EXOC1 degradation through the proteasome degradation pathway. Interacts with host CAPRIN1; this interaction is involved in the suppression of the integrated stress response. As to quaternary structure, forms heterodimers with envelope protein E in the endoplasmic reticulum and Golgi. In terms of assembly, homodimer; in the endoplasmic reticulum and Golgi. Interacts with protein prM. Interacts with non-structural protein 1. In terms of processing, genome polyprotein: Specific enzymatic cleavages in vivo yield mature proteins. Cleavages in the lumen of endoplasmic reticulum are performed by host signal peptidase, whereas cleavages in the cytoplasmic side are performed by serine protease NS3. Signal cleavage at the 2K-4B site requires a prior NS3 protease-mediated cleavage at the 4A-2K site. Post-translationally, cleaved in post-Golgi vesicles by a host furin, releasing the mature small envelope protein M, and peptide pr. This cleavage is incomplete as up to 30% of viral particles still carry uncleaved prM. N-glycosylated.

It localises to the secreted. The protein resides in the virion membrane. The protein localises to the host endoplasmic reticulum membrane. In terms of biological role, plays a role in virus budding by binding to the cell membrane and gathering the viral RNA into a nucleocapsid that forms the core of a mature virus particle. During virus entry, may induce genome penetration into the host cytoplasm after hemifusion induced by the surface proteins. Can migrate to the cell nucleus where it modulates host functions. Overcomes the anti-viral effects of host EXOC1 by sequestering and degrading the latter through the proteasome degradation pathway. Inhibits the integrated stress response (ISR) in the infected cell by binding to host CAPRIN1. Its function is as follows. Inhibits RNA silencing by interfering with host Dicer. Functionally, prevents premature fusion activity of envelope proteins in trans-Golgi by binding to envelope protein E at pH6.0. After virion release in extracellular space, gets dissociated from E dimers. Acts as a chaperone for envelope protein E during intracellular virion assembly by masking and inactivating envelope protein E fusion peptide. prM is the only viral peptide matured by host furin in the trans-Golgi network probably to avoid catastrophic activation of the viral fusion activity in acidic Golgi compartment prior to virion release. prM-E cleavage is inefficient, and many virions are only partially matured. These uncleaved prM would play a role in immune evasion. In terms of biological role, may play a role in virus budding. Exerts cytotoxic effects by activating a mitochondrial apoptotic pathway through M ectodomain. May display a viroporin activity. Its function is as follows. Binds to host cell surface receptor and mediates fusion between viral and cellular membranes. Envelope protein is synthesized in the endoplasmic reticulum in the form of heterodimer with protein prM. They play a role in virion budding in the ER, and the newly formed immature particle is covered with 60 spikes composed of heterodimer between precursor prM and envelope protein E. The virion is transported to the Golgi apparatus where the low pH causes dissociation of PrM-E heterodimers and formation of E homodimers. prM-E cleavage is inefficient, and many virions are only partially matured. These uncleaved prM would play a role in immune evasion. Functionally, may play a role in neuroinvasiveness. The protein is Structural polyprotein of Japanese encephalitis virus (strain Jaoars982) (JEV).